Here is a 979-residue protein sequence, read N- to C-terminus: Calsyntenin-1 (979 aa).

Positions 1 to 28 (MLRRPAPALAPAVRLLLAGLLCGGGVWA) are cleaved as a signal peptide. Topologically, residues 29–859 (ARVNKHKPWL…PHPFAVVPST (831 aa)) are extracellular. 2 consecutive Cadherin domains span residues 38 to 164 (LEPT…APVF) and 165 to 265 (KEKS…SPGW). N-linked (GlcNAc...) asparagine glycans are attached at residues Asn-346, Asn-366, and Asn-515. Residues 860 to 880 (ATVVIVVCVSFLVFMIILGVF) traverse the membrane as a helical segment. The Cytoplasmic segment spans residues 881–979 (RIRAAHQRTM…LEWDDSTLSY (99 aa)). The disordered stretch occupies residues 915 to 979 (METYEDQHSS…LEWDDSTLSY (65 aa)). A compositionally biased stretch (acidic residues) spans 925–959 (EEEEEEEEEEESEDGEEEEDITSAESESSEEEEGG).

Belongs to the calsyntenin family. Directly interacts with APBA2. Forms a tripartite complex with APBA2 and APP. The CTF1 chain interacts with PSEN1. Interacts with KLC1 and APBB1. In terms of assembly, interacts with APBB1; this interaction stabilizes AlcICD metabolism. As to quaternary structure, interacts with PSEN1. Post-translationally, proteolytically processed under normal cellular conditions. A primary zeta-cleavage generates a large extracellular (soluble) N-terminal domain (sAlc) and a short C-terminal transmembrane fragment (CTF1). A secondary cleavage catalyzed by presenilin gamma-secretase within the transmembrane domain releases the beta-Alc-alpha chain in the extracellular milieu and produces an intracellular fragment (AlcICD). Beta-Alc-alpha secretion is largely dependent upon PSEN1 and PSEN2. This processing is strongly suppressed in the tripartite complex formed with APBA2 and APP, which seems to prevent the association with PSEN1. Highly expressed in the brain (at protein level), with over 90% of the neurons expressing detectable amounts. In the brain, relatively high levels in the cerebral cortex, striatum, hippocampus and thalamus. Moderate levels in the cerebellum. Low levels in the olfactory bulb, midbrain and pons (at protein level). Not detected in Purkinje cells. Expressed at low levels in the lung (at protein level). At the mRNA level, weakly detected in the kidney, lung, skeletal muscle, heart and testis. Not expressed in the sciatic nerve fiber.

The protein resides in the postsynaptic cell membrane. It localises to the endoplasmic reticulum membrane. Its subcellular location is the golgi apparatus membrane. It is found in the cell projection. The protein localises to the neuron projection. The protein resides in the vesicle. It localises to the nucleus. Its function is as follows. Postsynaptic adhesion molecule that binds to presynaptic neurexins to mediate both excitatory and inhibitory synapse formation. Promotes synapse development by acting as a cell adhesion molecule at the postsynaptic membrane, which associates with neurexin-alpha at the presynaptic membrane. Also functions as a cargo in axonal anterograde transport by acting as a molecular adapter that promotes KLC1 association with vesicles. Complex formation with APBA2 and APP, stabilizes APP metabolism and enhances APBA2-mediated suppression of beta-APP40 secretion, due to the retardation of intracellular APP maturation. Functionally, as intracellular fragment AlcICD, suppresses APBB1-dependent transactivation stimulated by APP C-terminal intracellular fragment (AICD), most probably by competing with AICD for APBB1-binding. In terms of biological role, in complex with APBA2 and C99, a C-terminal APP fragment, abolishes C99 interaction with PSEN1 and thus APP C99 cleavage by gamma-secretase, most probably through stabilization of the direct interaction between APBA2 and APP. This Mus musculus (Mouse) protein is Calsyntenin-1.